Here is a 955-residue protein sequence, read N- to C-terminus: Structure-specific endonuclease subunit SLX4 (955 aa).

Disordered regions lie at residues 75–173, 189–231, 352–376, 539–608, 621–648, 705–784, and 819–846; these read QAEQ…RTTS, PVTT…TVSR, GPSN…KKPR, EMQK…PTKI, PIVA…PPPR, AAGQ…ASPD, and LDSD…EKDS. Basic residues predominate over residues 123 to 137; it reads RKARKTANGVTKKKR. Over residues 150–159 the composition is skewed to polar residues; that stretch reads NEITTPTKNQ. Low complexity predominate over residues 189-198; the sequence is PVTTSTTDLT. Residues 209 to 225 are compositionally biased toward basic residues; it reads TKSRVRKTSSAASRKKK. Positions 352-362 are enriched in polar residues; the sequence is GPSNDSKIPNQ. The segment covering 539–551 has biased composition (basic and acidic residues); sequence EMQKSPSRSEPKG. Over residues 579–601 the composition is skewed to polar residues; sequence SANSAEHTLKTQASKSTHFASTT. Low complexity-rich tracts occupy residues 705 to 720 and 727 to 737; these read AAGQ…RTSA and KTSTAAAAAKS. 2 stretches are compositionally biased toward basic residues: residues 738-748 and 767-776; these read PTKRPVGRPRK and KRPRGRPKKN. Over residues 828-841 the composition is skewed to low complexity; the sequence is SPSPSLSPEPVFSS.

It belongs to the SLX4 family. Forms a heterodimer with SLX1. In terms of processing, phosphorylated in response to DNA damage.

The protein localises to the nucleus. Regulatory subunit of the SLX1-SLX4 structure-specific endonuclease that resolves DNA secondary structures generated during DNA repair and recombination. Has endonuclease activity towards branched DNA substrates, introducing single-strand cuts in duplex DNA close to junctions with ss-DNA. The polypeptide is Structure-specific endonuclease subunit SLX4 (Pyricularia oryzae (strain 70-15 / ATCC MYA-4617 / FGSC 8958) (Rice blast fungus)).